A 336-amino-acid polypeptide reads, in one-letter code: MTAIDFHKLAKIELHCHLDGSLSLSTIRHLAELAQIDLPEDDEELKQHVTAPVTCESLLEYLESFDYIRPLLQTNEALTIAAYDVAKQAALENVIYIEVRFAPELSMDKGLTVTETIDAVCQGLRQAQEEFGIIAKALVCGMRQSDQSLTACILDEANQVRDSDFVGFDFAGDELNYGPAAIKPLIEQVKSYNRPMTFHAGECGCPAFLAESIAMGIKRNGHATILAQEPELLDEFVKNGVTGELCLTSNLQTKAAVTVNDFPYLKMKAAGANITINTDNRTVSDTNLTKEYELYHKYFDSTVQDFYAHNKTAIEASFASDEEKEELLARLAKAYS.

Zn(2+)-binding residues include H15 and H17. The substrate site is built by H17, D19, and G172. H199 serves as a coordination point for Zn(2+). E202 acts as the Proton donor in catalysis. D279 provides a ligand contact to Zn(2+).

The protein belongs to the metallo-dependent hydrolases superfamily. Adenosine and AMP deaminases family. Adenosine deaminase subfamily. Zn(2+) serves as cofactor.

It carries out the reaction adenosine + H2O + H(+) = inosine + NH4(+). The catalysed reaction is 2'-deoxyadenosine + H2O + H(+) = 2'-deoxyinosine + NH4(+). Catalyzes the hydrolytic deamination of adenosine and 2-deoxyadenosine. The chain is Adenosine deaminase from Streptococcus thermophilus (strain ATCC BAA-491 / LMD-9).